The primary structure comprises 69 residues: Large ribosomal subunit protein bL32c (69 aa).

This sequence belongs to the bacterial ribosomal protein bL32 family.

The protein localises to the plastid. The protein resides in the chloroplast. This chain is Large ribosomal subunit protein bL32c, found in Pelargonium hortorum (Common geranium).